Here is a 486-residue protein sequence, read N- to C-terminus: Wax ester synthase/diacylglycerol acyltransferase 11 (486 aa).

Residues Met-1–Trp-192 lie on the Cytoplasmic side of the membrane. Residue His-144 is the Proton acceptor of the active site. A helical transmembrane segment spans residues Trp-193–Leu-213. Topologically, residues Met-214–Val-486 are extracellular.

In the N-terminal section; belongs to the long-chain O-acyltransferase family. Mostly expressed in inflorescences and flowers, especially at the periphery of petal epidermal cells.

The protein localises to the cell membrane. It localises to the endoplasmic reticulum membrane. The enzyme catalyses an acyl-CoA + a 1,2-diacyl-sn-glycerol = a triacyl-sn-glycerol + CoA. It carries out the reaction a long chain fatty alcohol + a fatty acyl-CoA = a wax ester + CoA. The protein operates within glycerolipid metabolism; triacylglycerol biosynthesis. It functions in the pathway lipid metabolism. Its function is as follows. Bifunctional wax ester synthase/diacylglycerol acyltransferase. Involved in cuticular wax biosynthesis. Required for petals development, probably by mediating the production of fatty acids at the plasma membrane in the petal epidermis acting as lubricants that makes petal elongation smooth in narrow space between the sepals and the anthers inside floral buds. This chain is Wax ester synthase/diacylglycerol acyltransferase 11, found in Arabidopsis thaliana (Mouse-ear cress).